Here is a 412-residue protein sequence, read N- to C-terminus: Membrane fusion protein MtrC (412 aa).

The signal sequence occupies residues 1-24; that stretch reads MAFYASKAMRAAALAAAVALALSS. A lipid anchor (N-palmitoyl cysteine) is attached at cysteine 25. A lipid anchor (S-diacylglycerol cysteine) is attached at cysteine 25. The tract at residues 377–412 is disordered; it reads AKKVTPKEWAPSENQAAAPQAGVQTASEAKPASEAK. The segment covering 388-403 has biased composition (polar residues); it reads SENQAAAPQAGVQTAS.

This sequence belongs to the membrane fusion protein (MFP) (TC 8.A.1) family.

The protein localises to the cell inner membrane. Functionally, cell membrane lipoprotein, involved in cell membrane permeability to hydrophobic compounds such as antibiotics, dyes and detergents. The polypeptide is Membrane fusion protein MtrC (mtrC) (Neisseria gonorrhoeae).